We begin with the raw amino-acid sequence, 449 residues long: Phosphoglucosamine mutase (449 aa).

Catalysis depends on S100, which acts as the Phosphoserine intermediate. S100, D241, D243, and D245 together coordinate Mg(2+). S100 carries the post-translational modification Phosphoserine.

This sequence belongs to the phosphohexose mutase family. Requires Mg(2+) as cofactor. In terms of processing, activated by phosphorylation.

The catalysed reaction is alpha-D-glucosamine 1-phosphate = D-glucosamine 6-phosphate. Its function is as follows. Catalyzes the conversion of glucosamine-6-phosphate to glucosamine-1-phosphate. The protein is Phosphoglucosamine mutase of Clostridium botulinum (strain ATCC 19397 / Type A).